The sequence spans 124 residues: CBS domain-containing protein MJ0729 (124 aa).

CBS domains follow at residues 10–67 (MNKD…IEDL) and 70–124 (LIDE…YKNR).

In terms of assembly, exhibits a pH-dependent oligomerization state: at pH 7, the dominant species is a dimer, where each monomer is a two-CBS domain protein, and at pH 4.5-4.8, the dominant species is a tetramer, with an oblong shape. At pH 2.5, there is formation of intermolecular hydrogen bonds, suggesting the presence of high-molecular weight species. The physiological dimeric species is thermal and chemically very stable.

This is CBS domain-containing protein MJ0729 from Methanocaldococcus jannaschii (strain ATCC 43067 / DSM 2661 / JAL-1 / JCM 10045 / NBRC 100440) (Methanococcus jannaschii).